The sequence spans 150 residues: 3-hydroxyacyl-[acyl-carrier-protein] dehydratase FabZ (150 aa).

Residue H51 is part of the active site.

It belongs to the thioester dehydratase family. FabZ subfamily.

It is found in the cytoplasm. It carries out the reaction a (3R)-hydroxyacyl-[ACP] = a (2E)-enoyl-[ACP] + H2O. Involved in unsaturated fatty acids biosynthesis. Catalyzes the dehydration of short chain beta-hydroxyacyl-ACPs and long chain saturated and unsaturated beta-hydroxyacyl-ACPs. This chain is 3-hydroxyacyl-[acyl-carrier-protein] dehydratase FabZ, found in Geobacter sulfurreducens (strain ATCC 51573 / DSM 12127 / PCA).